The sequence spans 179 residues: Large ribosomal subunit protein uL6 (179 aa).

The protein belongs to the universal ribosomal protein uL6 family. In terms of assembly, part of the 50S ribosomal subunit.

This protein binds to the 23S rRNA, and is important in its secondary structure. It is located near the subunit interface in the base of the L7/L12 stalk, and near the tRNA binding site of the peptidyltransferase center. This Spiroplasma kunkelii protein is Large ribosomal subunit protein uL6.